Reading from the N-terminus, the 479-residue chain is MTAHDQELRRRAYEEVEKKEPIANSDPHRQHFHIMPPVGLLNDPNGVIYWKGSYHVFFQWQPFQTGHGAKFWGHYTTQDVVNWKREEIALAPSDWFDKNGCYSGSAVTKDDRLYLFYTGNVRDQDGNRETYQCLAVSDDGLSFEKKGVVARLPEGYTAHFRDPKVWEHEGTWYMVIGAQTENLKGQAVLFASDNLTEWRFLGPITGAGFNGLDDFGYMWECPDLFSLQGSDVLIVSPQGLEADGFRYQNVYQSGYFVGRLDYNKPELKHGEFTELDQGFDFYAPQTLEDDQGRRILFAWMAVPDQDEGSHPTIDCHWIHCMTLPRQLTLSGQKLIQQPLPELKAMRRNEKKIHINMHGSSGALPVEKPERTEILLEDIHTESGFSISIRGTATFSFHKDEGIVTLERKSFDGKRTEARHCRIKDLHTVHMFLDASSVEIFINNGEEVLSARYFPFPGNHEVTASATGKSEMNVGIWTLM.

The disordered stretch occupies residues 1–28 (MTAHDQELRRRAYEEVEKKEPIANSDPH). Substrate contacts are provided by residues 40–43 (LLND), Q59, 102–103 (YS), 161–162 (RD), and E220. D43 is a catalytic residue.

This sequence belongs to the glycosyl hydrolase 32 family.

It catalyses the reaction Hydrolysis of terminal non-reducing beta-D-fructofuranoside residues in beta-D-fructofuranosides.. It participates in glycan biosynthesis; sucrose metabolism. This chain is Sucrose-6-phosphate hydrolase (sacA), found in Bacillus subtilis (strain 168).